Consider the following 221-residue polypeptide: Ribonuclease T (221 aa).

Positions 21–195 constitute an Exonuclease domain; sequence VVVDVETAGF…YDAEKTADLF (175 aa). Residues Asp-24, Glu-26, His-182, and Asp-187 each contribute to the Mg(2+) site. Catalysis depends on His-182, which acts as the Proton donor/acceptor.

Belongs to the RNase T family. In terms of assembly, homodimer. Mg(2+) serves as cofactor.

Its function is as follows. Trims short 3' overhangs of a variety of RNA species, leaving a one or two nucleotide 3' overhang. Responsible for the end-turnover of tRNA: specifically removes the terminal AMP residue from uncharged tRNA (tRNA-C-C-A). Also appears to be involved in tRNA biosynthesis. The sequence is that of Ribonuclease T from Marinobacter nauticus (strain ATCC 700491 / DSM 11845 / VT8) (Marinobacter aquaeolei).